Consider the following 475-residue polypeptide: Cysteine--tRNA ligase (475 aa).

Residue C28 participates in Zn(2+) binding. Residues 30 to 40 carry the 'HIGH' region motif; it reads PTVYDYAHIGN. C213, H238, and E242 together coordinate Zn(2+). A 'KMSKS' region motif is present at residues 270 to 274; the sequence is KMSKS. ATP is bound at residue K273.

It belongs to the class-I aminoacyl-tRNA synthetase family. As to quaternary structure, monomer. Zn(2+) serves as cofactor.

The protein resides in the cytoplasm. The catalysed reaction is tRNA(Cys) + L-cysteine + ATP = L-cysteinyl-tRNA(Cys) + AMP + diphosphate. The chain is Cysteine--tRNA ligase (cysS) from Chlamydia muridarum (strain MoPn / Nigg).